The sequence spans 349 residues: tRNA pseudouridine synthase D (349 aa).

Substrate is bound at residue F27. D80 functions as the Nucleophile in the catalytic mechanism. N129 lines the substrate pocket. The TRUD domain maps to 155 to 303 (GVPNYFGAQR…VEAARRAMLL (149 aa)). F329 contacts substrate.

Belongs to the pseudouridine synthase TruD family.

The catalysed reaction is uridine(13) in tRNA = pseudouridine(13) in tRNA. Its function is as follows. Responsible for synthesis of pseudouridine from uracil-13 in transfer RNAs. The polypeptide is tRNA pseudouridine synthase D (Shigella sonnei (strain Ss046)).